A 122-amino-acid polypeptide reads, in one-letter code: Large ribosomal subunit protein uL18 (122 aa).

A disordered region spans residues 1 to 27 (MATLSKKQQTQKRHKRLRRHLNGTNHR). A compositionally biased stretch (basic residues) spans 9–27 (QTQKRHKRLRRHLNGTNHR).

Belongs to the universal ribosomal protein uL18 family. Part of the 50S ribosomal subunit; part of the 5S rRNA/L5/L18/L25 subcomplex. Contacts the 5S and 23S rRNAs.

Its function is as follows. This is one of the proteins that bind and probably mediate the attachment of the 5S RNA into the large ribosomal subunit, where it forms part of the central protuberance. The polypeptide is Large ribosomal subunit protein uL18 (Prochlorococcus marinus (strain MIT 9211)).